We begin with the raw amino-acid sequence, 908 residues long: Structural core protein VP2 (908 aa).

Residues 1–19 (MANPQNRVQTERQQNNSSP) are compositionally biased toward polar residues. The segment at 1–25 (MANPQNRVQTERQQNNSSPYLRGDE) is disordered.

The protein belongs to the orbivirus VP3 family.

The protein localises to the virion. The sequence is that of Structural core protein VP2 (Segment-2) from Ixodes (gulls).